A 244-amino-acid polypeptide reads, in one-letter code: Carboxy-S-adenosyl-L-methionine synthase (244 aa).

Residues Tyr40, 65–67 (GCS), 90–91 (DN), 119–120 (DL), Asn134, and Arg201 each bind S-adenosyl-L-methionine.

This sequence belongs to the class I-like SAM-binding methyltransferase superfamily. Cx-SAM synthase family. As to quaternary structure, homodimer.

The catalysed reaction is prephenate + S-adenosyl-L-methionine = carboxy-S-adenosyl-L-methionine + 3-phenylpyruvate + H2O. In terms of biological role, catalyzes the conversion of S-adenosyl-L-methionine (SAM) to carboxy-S-adenosyl-L-methionine (Cx-SAM). This chain is Carboxy-S-adenosyl-L-methionine synthase, found in Trichlorobacter lovleyi (strain ATCC BAA-1151 / DSM 17278 / SZ) (Geobacter lovleyi).